The following is a 303-amino-acid chain: S-methyl-5'-thioadenosine phosphorylase 1 (303 aa).

Phosphate contacts are provided by residues S14, 57–58 (RH), and 90–91 (SA). Position 198 (M198) interacts with substrate. Position 199 (S199) interacts with phosphate. A substrate-binding site is contributed by 222–224 (DYD).

It belongs to the PNP/MTAP phosphorylase family. MTAP subfamily. In terms of assembly, homotrimer.

It is found in the cytoplasm. It localises to the nucleus. The catalysed reaction is S-methyl-5'-thioadenosine + phosphate = 5-(methylsulfanyl)-alpha-D-ribose 1-phosphate + adenine. The protein operates within amino-acid biosynthesis; L-methionine biosynthesis via salvage pathway; S-methyl-5-thio-alpha-D-ribose 1-phosphate from S-methyl-5'-thioadenosine (phosphorylase route): step 1/1. Its function is as follows. Catalyzes the reversible phosphorylation of S-methyl-5'-thioadenosine (MTA) to adenine and 5-methylthioribose-1-phosphate. Involved in the breakdown of MTA, a major by-product of polyamine biosynthesis. Responsible for the first step in the methionine salvage pathway after MTA has been generated from S-adenosylmethionine. Has broad substrate specificity with 6-aminopurine nucleosides as preferred substrates. This chain is S-methyl-5'-thioadenosine phosphorylase 1, found in Puccinia graminis f. sp. tritici (strain CRL 75-36-700-3 / race SCCL) (Black stem rust fungus).